The sequence spans 634 residues: Chaperone protein HtpG (634 aa).

Residues 1–342 (MSVETQKETL…SNDLSLNVSR (342 aa)) are a; substrate-binding. The segment at 343–559 (EILQKDPVID…EQDLGLQMRQ (217 aa)) is b. A c region spans residues 560-634 (ILEASGQKVP…LNKLLVELSA (75 aa)).

It belongs to the heat shock protein 90 family. As to quaternary structure, homodimer.

The protein resides in the cytoplasm. In terms of biological role, molecular chaperone. Has ATPase activity. This chain is Chaperone protein HtpG, found in Ectopseudomonas mendocina (strain ymp) (Pseudomonas mendocina).